We begin with the raw amino-acid sequence, 197 residues long: MQKVVLATGNVGKVRELASLLSDFGLDIVAQTDLGVDSAEETGLTFIENAILKARHAAKVTALPAIADDSGLAVDVLGGAPGIYSARYSGEDATDQKNLQKLLETMKDVPDDQRQARFHCVLVYLRHAEDPTPLVCHGSWPGVITREPAGTGGFGYDPIFFVPSEGKTAAELTREEKSAISHRGQALKLLLDALRNG.

8–13 (TGNVGK) is a substrate binding site. The Mg(2+) site is built by Glu40 and Asp69. Asp69 (proton acceptor) is an active-site residue. Substrate contacts are provided by residues Ser70, 154–157 (FGYD), Lys177, and 182–183 (HR).

The protein belongs to the HAM1 NTPase family. As to quaternary structure, homodimer. Mg(2+) serves as cofactor. Requires Mn(2+) as cofactor. The cofactor is Ni(2+).

It catalyses the reaction XTP + H2O = XMP + diphosphate + H(+). The enzyme catalyses dITP + H2O = dIMP + diphosphate + H(+). The catalysed reaction is ITP + H2O = IMP + diphosphate + H(+). Functionally, pyrophosphatase that catalyzes the hydrolysis of nucleoside triphosphates to their monophosphate derivatives, with a high preference for the non-canonical purine nucleotides XTP (xanthosine triphosphate), dITP (deoxyinosine triphosphate) and ITP. Can also efficiently hydrolyze 2'-deoxy-N-6-hydroxylaminopurine triphosphate (dHAPTP). Seems to function as a house-cleaning enzyme that removes non-canonical purine nucleotides from the nucleotide pool, thus preventing their incorporation into DNA/RNA and avoiding chromosomal lesions. To a much lesser extent, is also able to hydrolyze GTP, dGTP and dUTP, but shows very low activity toward the canonical nucleotides dATP, dCTP and dTTP and toward 8-oxo-dGTP, purine deoxyribose triphosphate, 2-aminopurine deoxyribose triphosphate and 2,6-diaminopurine deoxyribose triphosphate. In terms of biological role, genetic interactions among priB, dam, lexA, nagC, polA, rdgB, rdgB, rep and uup link the PriA-PriB replication restart pathway to DNA double-strand break repair. The chain is dITP/XTP pyrophosphatase from Escherichia coli (strain K12).